A 1270-amino-acid polypeptide reads, in one-letter code: DNA-directed RNA polymerase subunit beta (1270 aa).

Belongs to the RNA polymerase beta chain family. The RNAP catalytic core consists of 2 alpha, 1 beta, 1 beta' and 1 omega subunit. When a sigma factor is associated with the core the holoenzyme is formed, which can initiate transcription.

It carries out the reaction RNA(n) + a ribonucleoside 5'-triphosphate = RNA(n+1) + diphosphate. Functionally, DNA-dependent RNA polymerase catalyzes the transcription of DNA into RNA using the four ribonucleoside triphosphates as substrates. The sequence is that of DNA-directed RNA polymerase subunit beta from Phocaeicola vulgatus (strain ATCC 8482 / DSM 1447 / JCM 5826 / CCUG 4940 / NBRC 14291 / NCTC 11154) (Bacteroides vulgatus).